The sequence spans 86 residues: Small ribosomal subunit protein bS20 (86 aa).

Positions 1 to 18 (MANIKSQEKRIRTNERAR) are enriched in basic and acidic residues. A disordered region spans residues 1–25 (MANIKSQEKRIRTNERARLRNQATK).

It belongs to the bacterial ribosomal protein bS20 family.

In terms of biological role, binds directly to 16S ribosomal RNA. The protein is Small ribosomal subunit protein bS20 of Mycobacteroides abscessus (strain ATCC 19977 / DSM 44196 / CCUG 20993 / CIP 104536 / JCM 13569 / NCTC 13031 / TMC 1543 / L948) (Mycobacterium abscessus).